Consider the following 2249-residue polypeptide: Outer membrane protein A (2249 aa).

The first 28 residues, 1–28 (MANISPKLFKKAIQQGLKAALFTTSTAA), serve as a signal peptide directing secretion. The Type I 1 repeat unit spans residues 212 to 286 (IGNTNALATV…NGALSQVTGD (75 aa)). The tract at residues 212–1180 (IGNTNALATV…ALATVNVGAG (969 aa)) is 14 X approximate tandem repeats. Type II repeat units lie at residues 287 to 358 (IGNT…VTGN) and 359 to 430 (VGNT…VTGD). The stretch at 431–505 (IGNTNALATV…NGALSQVTGN (75 aa)) is one Type I 2 repeat. The Type II 3 repeat unit spans residues 506-577 (IGNTNSLATI…FTGNSTVTGD (72 aa)). A Type I 3 repeat occupies 578-652 (IGNTNSLATI…NGALSQVTGD (75 aa)). One copy of the Type II 4 repeat lies at 653 to 724 (IGNTNSLATI…FTGNSTVTGD (72 aa)). Type I repeat units follow at residues 725–799 (IGNT…VTGD), 800–874 (IGNT…VTGD), and 875–949 (IGNT…VTGD). Type II repeat units follow at residues 950–1021 (IGNT…VTGN), 1022–1093 (VGNT…VTGN), and 1094–1165 (VGNT…VTGD). Residues 1166–1180 (IGNTNALATVNVGAG) form a Type I 7; truncated repeat. The region spanning 1962 to 2249 (DMDAKFGAWI…QGSVKVRVNF (288 aa)) is the Autotransporter domain.

The protein belongs to the rickettsiae OmpA/OmpB family. In terms of processing, glycosylated.

It localises to the periplasm. The protein localises to the secreted. The protein resides in the cell surface. It is found in the cell outer membrane. Its function is as follows. Elicits protective immunity. In Rickettsia rickettsii, this protein is Outer membrane protein A (ompA).